A 328-amino-acid chain; its full sequence is Integrator complex subunit 12 (328 aa).

A sufficient for binding to IntS1 and IntS9 and for 3'-end snRNA processing region spans residues 1–45 (MAANIAAAAAAAQEVDPVLKKAIKLLHSSNPTSAAELRLLLDEAL). A PHD-type zinc finger spans residues 128-185 (DLNCCVCGEMVFTATNRLIECSKCGAMYHQECHKPPITKEEAADDQEQNWQCDTCCNK). 4 stretches are compositionally biased toward low complexity: residues 215–233 (KAKSSVASSRSSNSSNSSS), 241–264 (SSSTNASSSSSSKHGHKSSSSSSS), 274–283 (KSTAASSLSA), and 292–311 (SSGTSSRRSGSSTKSSSKSS). Residues 215–328 (KAKSSVASSR…GSSSKRRSKQ (114 aa)) are disordered.

This sequence belongs to the Integrator subunit 12 family. Belongs to the multiprotein complex Integrator, at least composed of IntS1, IntS2, IntS3, IntS4, omd/IntS5, IntS6, defl/IntS7, IntS8, IntS9, IntS10, IntS11, IntS12, asun/IntS13, IntS14 and IntS15. The core complex associates with protein phosphatase 2A subunits mts/PP2A and Pp2A-29B, to form the Integrator-PP2A (INTAC) complex. Within the complex, interacts with IntS1 and IntS9. Interaction with IntS1 is likely to be important for promoting 3'-end processing of snRNAs.

The protein localises to the nucleus. Component of the integrator complex, a multiprotein complex that terminates RNA polymerase II (Pol II) transcription in the promoter-proximal region of genes. The integrator complex provides a quality checkpoint during transcription elongation by driving premature transcription termination of transcripts that are unfavorably configured for transcriptional elongation: the complex terminates transcription by (1) catalyzing dephosphorylation of the C-terminal domain (CTD) of Pol II subunit Polr2A/Rbp1 and Spt5, and (2) degrading the exiting nascent RNA transcript via endonuclease activity. The integrator complex is also involved in the 3'-end processing of the U7 snRNA, and also the spliceosomal snRNAs U1, U2, U4 and U5. Required for the normal expression of the Integrator complex component IntS1. The chain is Integrator complex subunit 12 from Drosophila melanogaster (Fruit fly).